A 28-amino-acid chain; its full sequence is Kappa-stichotoxin-Shd1a/kappa-stichotoxin-Shd1b (28 aa).

At proline 6 the chain carries 4-hydroxyproline; in form SHTX-1 (Shd1a). 2 disulfide bridges follow: cysteine 7-cysteine 19 and cysteine 10-cysteine 25.

It belongs to the sea anemone BBH family. Occurs in 2 forms which differ in the post-translational modification of Pro-6. In form SHTX-1 (Shd1a) Pro-6 is a hydroxyproline while in form SHTX-2 (Shd1b) Pro-6 is unmodified.

It localises to the secreted. It is found in the nematocyst. In terms of biological role, kappa-stichotoxin-Shd1a: inhibits voltage-gated potassium channels (Kv). Functionally, kappa-stichotoxin-Shd1b: inhibits voltage-gated potassium channels (Kv). This toxin inhibits the binding of 125I-alpha-dendrotoxin to synaptosomal membranes (IC(50)=270 nM). The chain is Kappa-stichotoxin-Shd1a/kappa-stichotoxin-Shd1b from Stichodactyla haddoni (Saddle carpet anemone).